The following is a 124-amino-acid chain: MMMGVELAFPKVVGKQVYGSLYECDEDVLKDTKRLEQIIKEAADIGNMNILDIKSWKIGEGVSVVAIILESHITIHTWPEYRFATVDVYSCGPHTSPLNAFRYIVEKLGAKRYTINEADRSSEF.

The active-site Schiff-base intermediate with substrate; via pyruvic acid is the Ser71. Ser71 bears the Pyruvic acid (Ser); by autocatalysis mark. His76 (proton acceptor; for processing activity) is an active-site residue. Cys91 serves as the catalytic Proton donor; for catalytic activity.

This sequence belongs to the prokaryotic AdoMetDC family. Type 1 subfamily. In terms of assembly, heterotetramer of two alpha and two beta chains arranged as a dimer of alpha/beta heterodimers. Pyruvate serves as cofactor. In terms of processing, is synthesized initially as an inactive proenzyme. Formation of the active enzyme involves a self-maturation process in which the active site pyruvoyl group is generated from an internal serine residue via an autocatalytic post-translational modification. Two non-identical subunits are generated from the proenzyme in this reaction, and the pyruvate is formed at the N-terminus of the alpha chain, which is derived from the carboxyl end of the proenzyme. The post-translation cleavage follows an unusual pathway, termed non-hydrolytic serinolysis, in which the side chain hydroxyl group of the serine supplies its oxygen atom to form the C-terminus of the beta chain, while the remainder of the serine residue undergoes an oxidative deamination to produce ammonia and the pyruvoyl group blocking the N-terminus of the alpha chain.

The enzyme catalyses S-adenosyl-L-methionine + H(+) = S-adenosyl 3-(methylsulfanyl)propylamine + CO2. Its pathway is amine and polyamine biosynthesis; S-adenosylmethioninamine biosynthesis; S-adenosylmethioninamine from S-adenosyl-L-methionine: step 1/1. Competitively inhibited by methylglyoxal bis-guanylhydrazone. Irreversibly inhibited by NaBH(4) in vitro. Its function is as follows. Catalyzes the decarboxylation of S-adenosylmethionine to S-adenosylmethioninamine (dcAdoMet), the propylamine donor required for the synthesis of the polyamines spermine and spermidine from the diamine putrescine. Has no arginine decarboxylase (ArgDC) activity. The protein is S-adenosylmethionine decarboxylase proenzyme (speH) of Saccharolobus solfataricus (strain ATCC 35092 / DSM 1617 / JCM 11322 / P2) (Sulfolobus solfataricus).